Here is a 329-residue protein sequence, read N- to C-terminus: Malate dehydrogenase (329 aa).

12–18 (GAAGQIG) serves as a coordination point for NAD(+). Residues arginine 93 and arginine 99 each contribute to the substrate site. NAD(+)-binding positions include asparagine 106, glutamine 113, and 130 to 132 (TGN). Residues asparagine 132 and arginine 163 each contribute to the substrate site. The active-site Proton acceptor is the histidine 188.

Belongs to the LDH/MDH superfamily. MDH type 2 family.

It carries out the reaction (S)-malate + NAD(+) = oxaloacetate + NADH + H(+). Functionally, catalyzes the reversible oxidation of malate to oxaloacetate. This chain is Malate dehydrogenase, found in Mycobacterium ulcerans (strain Agy99).